The chain runs to 195 residues: E3 ubiquitin-protein ligase ZNRF1 (195 aa).

The span at 1 to 10 (MGGKQSSASR) shows a compositional bias: polar residues. The disordered stretch occupies residues 1-37 (MGGKQSSASRSRAPFPGVSSDDSAVPPSSNFGHFRGG). G2 carries N-myristoyl glycine lipidation. Residues 18-29 (VSSDDSAVPPSS) show a composition bias toward low complexity. Residues 152–193 (CVICLEELSQGDTIARLPCLCIYHKSCIDSWFEVNRCCPEHP) form an RING-type; atypical zinc finger.

Its subcellular location is the endosome. It localises to the lysosome. It is found in the membrane. It catalyses the reaction S-ubiquitinyl-[E2 ubiquitin-conjugating enzyme]-L-cysteine + [acceptor protein]-L-lysine = [E2 ubiquitin-conjugating enzyme]-L-cysteine + N(6)-ubiquitinyl-[acceptor protein]-L-lysine.. The protein operates within protein modification; protein ubiquitination. Its function is as follows. E3 ubiquitin-protein ligase that plays a role in neuron cells differentiation. Plays a role in the establishment and maintenance of neuronal transmission and plasticity. The polypeptide is E3 ubiquitin-protein ligase ZNRF1 (znrf1) (Xenopus laevis (African clawed frog)).